A 192-amino-acid polypeptide reads, in one-letter code: Signal peptidase complex catalytic subunit SEC11C (192 aa).

Residues 1–28 (MVRAGAVGTHLPTSSLDIFGDLRKMNKR) lie on the Cytoplasmic side of the membrane. Residues 29 to 48 (QLYYQVLNFAMIVSSALMIW) traverse the membrane as a helical; Signal-anchor for type II membrane protein segment. Over 49-192 (KGLIVLTGSE…GAYVLLKRES (144 aa)) the chain is Lumenal. Residues Ser-68, His-108, and Asp-134 each act as charge relay system in the active site. Residues 177-188 (ALVAVMGAYVLL) form a C-terminal short (CTS) helix region.

Belongs to the peptidase S26B family. Component of the signal peptidase complex paralog C (SPC-C) composed of a catalytic subunit SEC11C and three accessory subunits SPCS1, SPCS2 and SPCS3. Within the complex, interacts with SPCS2 and SPCS3. The complex induces a local thinning of the ER membrane which is used to measure the length of the signal peptide (SP) h-region of protein substrates. This ensures the selectivity of the complex towards h-regions shorter than 18-20 amino acids. May undergo processing at the N-terminus.

The protein resides in the endoplasmic reticulum membrane. The catalysed reaction is Cleavage of hydrophobic, N-terminal signal or leader sequences from secreted and periplasmic proteins.. In terms of biological role, catalytic component of the signal peptidase complex (SPC) which catalyzes the cleavage of N-terminal signal sequences from nascent proteins as they are translocated into the lumen of the endoplasmic reticulum. Specifically cleaves N-terminal signal peptides that contain a hydrophobic alpha-helix (h-region) shorter than 18-20 amino acids. The chain is Signal peptidase complex catalytic subunit SEC11C (Sec11c) from Rattus norvegicus (Rat).